Here is a 574-residue protein sequence, read N- to C-terminus: Avenacosidase 1 (574 aa).

The transit peptide at 1–55 (MALLCSALSNSTHPSFRSHIGANSENLWHLSADPAQKSKRRCNLTLSSRAARISS) directs the protein to the chloroplast. Residues Q88, H192, and 237–238 (NE) each bind a beta-D-glucoside. The active-site Proton donor is E238. The cysteines at positions 258 and 264 are disulfide-linked. Residues Y381, E454, W505, 512–513 (EW), and F521 contribute to the a beta-D-glucoside site. E454 acts as the Nucleophile in catalysis.

This sequence belongs to the glycosyl hydrolase 1 family. As to quaternary structure, homo- and heteromultimer with P60B in a 1:1 stoichiometry. Aggregates to form the fibrillar stromacentre. In terms of tissue distribution, expressed in caryopses, coleoptiles, primary leaves, and etiolated and green seedlings, but not in roots.

It is found in the plastid. It localises to the chloroplast stroma. It catalyses the reaction avenacoside B + H2O = 26-desgluco-avenacoside B + D-glucose. Its activity is regulated as follows. Inhibited by N-(3-Dimethylaminopropyl)-N'-ethylcarbodiimide hydrochloride (EDC). Functionally, beta-glucosidase acting as a preformed defense system. Hydrolyzes the bisdesmosides avenacosides A and B to 26-desgluco-avenacosides exhibiting fungicidal activity. Can use beta-fucoside &gt; beta-glucoside &gt; beta-galactoside &gt; beta-xyloside as substrates, but not alpha-glycosides, beta-thioglucosides and disaccharides. This is Avenacosidase 1 (P60A) from Avena sativa (Oat).